The sequence spans 741 residues: Ethylene receptor (741 aa).

Transmembrane regions (helical) follow at residues 23-43 (ISDF…IYFV), 53-73 (WVLV…LINL), and 92-112 (VLTA…IPDL). Positions 65 and 69 each coordinate Cu cation. The GAF domain occupies 158-307 (DRHTILKTTL…VVADQVAVAL (150 aa)). The 240-residue stretch at 350 to 589 (VMNHEMRTPM…TFIVKLGFPE (240 aa)) folds into the Histidine kinase domain. Phosphohistidine; by autocatalysis is present on His-353. The region spanning 615–732 (KVLVMDDNGV…KMRSVLSELL (118 aa)) is the Response regulatory domain. Asp-663 carries the post-translational modification 4-aspartylphosphate.

The protein belongs to the ethylene receptor family. Homodimer; disulfide-linked. Requires Cu cation as cofactor. Activation probably requires a transfer of a phosphate group between a His in the transmitter domain and an Asp of the receiver domain.

Its subcellular location is the endoplasmic reticulum membrane. The catalysed reaction is ATP + protein L-histidine = ADP + protein N-phospho-L-histidine.. In terms of biological role, may act early in the ethylene signal transduction pathway, possibly as an ethylene receptor, or as a regulator of the pathway. The polypeptide is Ethylene receptor (ETR1) (Malus domestica (Apple)).